A 193-amino-acid polypeptide reads, in one-letter code: Probable DNA-directed RNA polymerase subunit delta (193 aa).

The HTH HARE-type domain maps to L14–W81. 2 stretches are compositionally biased toward acidic residues: residues D119–L174 and D182–K193. The disordered stretch occupies residues D119–K193.

This sequence belongs to the RpoE family. As to quaternary structure, RNAP is composed of a core of 2 alpha, a beta and a beta' subunits. The core is associated with a delta subunit and one of several sigma factors.

Its function is as follows. Participates in both the initiation and recycling phases of transcription. In the presence of the delta subunit, RNAP displays an increased specificity of transcription, a decreased affinity for nucleic acids, and an increased efficiency of RNA synthesis because of enhanced recycling. In Leuconostoc citreum (strain KM20), this protein is Probable DNA-directed RNA polymerase subunit delta.